The chain runs to 485 residues: MIQHTNARQSSVAIAPLRQLVSDSPEQWGYWLGRKHYSLEVVQHPLRARMCGFGDKDRRPLAPAAVAKMVVRRDDNSIVDVDDMDCSFFLVTVDLWSEDGKHETNLVLHPSSVDRHIPPHSSTKSRRRGTSSSAPQSRAPANQTPSGGSTPTLSQHRPGEQRPPLPHPHASGYNNQGYVTPHAPQVNDALGFPPSTPYGPTQADSSWGYPPPPPGDRSTSFPHPTLPSIHTLGRSPSSSTSDHWNSEPEPQSLPYGAWNTDAPYHPSISSYSNSQVDPSVRNHSNSEGIENPGWSSSEATSPHSQADHAAYESSTYHHSAYHPAPTHSQMAPGTCSSQHVSTVPPPPRHTYTRTLVGPLSANACRLLDEHRKPGIFFLFQDLSVRTEGTFRLRMRLMNVGAPPAPEVGAARVHNDVSPVLAQTFTEQFTVYSAKRFPGVPDTTALSIALGNQGQKLPLASDGLSEALVEESSRVQQASETQWFRV.

The Velvet domain maps to 33 to 459 (GRKHYSLEVV…GNQGQKLPLA (427 aa)). A disordered region spans residues 107–353 (VLHPSSVDRH…PPPPRHTYTR (247 aa)). Composition is skewed to polar residues over residues 134–155 (APQSRAPANQTPSGGSTPTLSQ), 234–243 (RSPSSSTSDH), 267–304 (SISSYSNSQVDPSVRNHSNSEGIENPGWSSSEATSPHS), and 326–341 (THSQMAPGTCSSQHVS).

Belongs to the velvet family. VelB subfamily. As to quaternary structure, component of the heterotrimeric velvet complex composed of laeA, veA and velB; VeA acting as a bridging protein between laeA and velB. Forms a heterodimeric complex with vosA; the formation of the velB-vosA complex is light-dependent.

Its subcellular location is the nucleus. The protein resides in the cytoplasm. Its function is as follows. Component of the velvet transcription factor complex that controls sexual/asexual developmental ratio in response to light, promoting sexual development in the darkness while stimulating asexual sporulation under illumination. The velvet complex acts as a global regulator for secondary metabolite gene expression. Component of the velB-VosA heterodimeric complex that plays a dual role in activating genes associated with spore maturation and repressing certain development-associated genes. The velB-VosA complex binds DNA through the DNA-binding domain of vosA that recognizes an 11-nucleotide consensus sequence 5'-CTGGCCGCGGC-3' consisting of two motifs in the promoters of key developmental regulatory genes. The sequence is that of Velvet complex subunit B from Laccaria bicolor (strain S238N-H82 / ATCC MYA-4686) (Bicoloured deceiver).